Here is a 256-residue protein sequence, read N- to C-terminus: Ribosomal RNA small subunit methyltransferase J (256 aa).

S-adenosyl-L-methionine contacts are provided by residues 104-105 (RD), 120-121 (ER), 156-157 (SS), and Asp-174.

Belongs to the methyltransferase superfamily. RsmJ family.

The protein localises to the cytoplasm. It catalyses the reaction guanosine(1516) in 16S rRNA + S-adenosyl-L-methionine = N(2)-methylguanosine(1516) in 16S rRNA + S-adenosyl-L-homocysteine + H(+). Specifically methylates the guanosine in position 1516 of 16S rRNA. This chain is Ribosomal RNA small subunit methyltransferase J, found in Yersinia pseudotuberculosis serotype O:3 (strain YPIII).